The sequence spans 467 residues: MTELFRHSKHLLASLALLSVLGLMLAMHPSPSAIERIMARGELVVLTRPSNTTYYEDQHGFTGMEYELAKGFADSQGVELRILESDDLSYIRYAIRKGTADIVAAGLIATPERSKSLRFSTAYQNVDVLLVRRLTSHRITDLSQLNQQTIAVSAGSSHAELLLKAQLESPELEFQEVENATPEQLLALVEDGQVDYTLINSNSYTLQRALWPDLVADYTVARDMPLSWAFNPKDDKSLYQEAQRYLTQAKADGTTAKLEDRFYGHVEQFNLYAARSFMRHLDDRLPLYEDLFKQAEEDSGFDWRLLAALAYQESLWDPQAISPTGVKGLMMLTNNTARQMGISDRTDPSQSIRAGAGYLRRTHARIPDRIPEPSRTWMALAAYNVGYGHLEDARVLTQRQGGNPDNWQDVKQRLPLLAKPAYADQLRYGTAPGGQAVAYVRHIRRYYDLLVWAENSRRRDDTLIALN.

An N-terminal signal peptide occupies residues 1–33; sequence MTELFRHSKHLLASLALLSVLGLMLAMHPSPSA. Residues 34–266 form a non-LT domain region; it reads IERIMARGEL…KLEDRFYGHV (233 aa). An LT domain region spans residues 268–467; the sequence is QFNLYAARSF…RRDDTLIALN (200 aa). Residue E313 is part of the active site.

The protein in the N-terminal section; belongs to the bacterial solute-binding protein 3 family. In the C-terminal section; belongs to the transglycosylase Slt family.

It localises to the cell outer membrane. The catalysed reaction is Exolytic cleavage of the (1-&gt;4)-beta-glycosidic linkage between N-acetylmuramic acid (MurNAc) and N-acetylglucosamine (GlcNAc) residues in peptidoglycan, from either the reducing or the non-reducing ends of the peptidoglycan chains, with concomitant formation of a 1,6-anhydrobond in the MurNAc residue.. Murein-degrading enzyme that degrades murein glycan strands and insoluble, high-molecular weight murein sacculi, with the concomitant formation of a 1,6-anhydromuramoyl product. Lytic transglycosylases (LTs) play an integral role in the metabolism of the peptidoglycan (PG) sacculus. Their lytic action creates space within the PG sacculus to allow for its expansion as well as for the insertion of various structures such as secretion systems and flagella. In Alcanivorax borkumensis (strain ATCC 700651 / DSM 11573 / NCIMB 13689 / SK2), this protein is Membrane-bound lytic murein transglycosylase F.